A 390-amino-acid polypeptide reads, in one-letter code: MPPSRLRLLPLLLPLLWLLVLAPGRPASGLSTCKTIDMELVKRKRIEAIRGQILSKLRLASPPSQGDVPPGPLPEAVLALYNSTRDRVAGESAEPEPEPEPDYYAKEVTRVLMVDNSHNIYKSIETVAHSIYMFFNTSELREAVPDPLLLSRAELRMQRLKLNVEQHVELYQKYSNNSWRYLSNQLLTPSDTPEWLSFDVTGVVRQWLSQGEELEGFRFSAHCSCDSKDNTLRVEINGIGPKRRGDLAAIHGMNRPFLLLMATPLERAQHLHSSRHRRGLDTNYCFSSTEKNCCVRQLYIDFRKDLGWKWIHEPKGYHANFCLGPCPYIWSLDTQYSKVLALYNQHNPGASAAPCCVPQALEPLPIVYYVGRKAKVEQLSNMIVRSCKCS.

Positions 1 to 29 (MPPSRLRLLPLLLPLLWLLVLAPGRPASG) are cleaved as a signal peptide. The tract at residues 30–74 (LSTCKTIDMELVKRKRIEAIRGQILSKLRLASPPSQGDVPPGPLP) is straightjacket domain. The arm domain stretch occupies residues 75-271 (EAVLALYNST…ATPLERAQHL (197 aa)). N-linked (GlcNAc...) asparagine glycans are attached at residues Asn-82, Asn-136, and Asn-176. Positions 226-252 (DSKDNTLRVEINGIGPKRRGDLAAIHG) are bowtie tail. The short motif at 244–246 (RGD) is the Cell attachment site element. Cystine bridges form between Cys-285-Cys-294, Cys-293-Cys-356, Cys-322-Cys-387, and Cys-326-Cys-389.

The protein belongs to the TGF-beta family. Homodimer; disulfide-linked. Interacts with the serine proteases, HTRA1 and HTRA3: the interaction with either inhibits TGFB1-mediated signaling and the HTRA protease activity is required for this inhibition. May interact with THSD4; this interaction may lead to sequestration by FBN1 microfibril assembly and attenuation of TGFB signaling. Interacts with CD109, DPT and ASPN. Interacts with EFEMP2. Interacts with TSKU; the interaction contributes to regulation of the hair cycle. Interacts with TGFBR3. In terms of assembly, homodimer; disulfide-linked. Interacts with transforming growth factor beta-1 (TGF-beta-1) chain; interaction is non-covalent and maintains TGF-beta-1 in a latent state; each latency-associated peptide (LAP) monomer interacts with TGF-beta-1 in the other monomer. Interacts with LTBP1; leading to regulation of TGF-beta-1 activation. Interacts with LRRC32/GARP; leading to regulation of TGF-beta-1 activation on the surface of activated regulatory T-cells (Tregs). Interacts with LRRC33/NRROS; leading to regulation of TGF-beta-1 in macrophages and microglia. Interacts (via cell attachment site) with integrins ITGAV and ITGB6 (ITGAV:ITGB6), leading to release of the active TGF-beta-1. Interacts with NREP; the interaction results in a decrease in TGFB1 autoinduction. Interacts with HSP90AB1; inhibits latent TGFB1 activation. As to quaternary structure, homodimer; disulfide-linked. Interacts with TGF-beta receptors (TGFBR1 and TGFBR2), leading to signal transduction. In terms of processing, transforming growth factor beta-1 proprotein: The precursor proprotein is cleaved in the Golgi apparatus by FURIN to form Transforming growth factor beta-1 (TGF-beta-1) and Latency-associated peptide (LAP) chains, which remain non-covalently linked, rendering TGF-beta-1 inactive. Post-translationally, N-glycosylated. Deglycosylation leads to activation of Transforming growth factor beta-1 (TGF-beta-1); mechanisms triggering deglycosylation-driven activation of TGF-beta-1 are however unclear.

Its subcellular location is the secreted. The protein localises to the extracellular space. It is found in the extracellular matrix. Transforming growth factor beta-1 proprotein: Precursor of the Latency-associated peptide (LAP) and Transforming growth factor beta-1 (TGF-beta-1) chains, which constitute the regulatory and active subunit of TGF-beta-1, respectively. In terms of biological role, required to maintain the Transforming growth factor beta-1 (TGF-beta-1) chain in a latent state during storage in extracellular matrix. Associates non-covalently with TGF-beta-1 and regulates its activation via interaction with 'milieu molecules', such as LTBP1, LRRC32/GARP and LRRC33/NRROS, that control activation of TGF-beta-1. Interaction with LRRC33/NRROS regulates activation of TGF-beta-1 in macrophages and microglia. Interaction with LRRC32/GARP controls activation of TGF-beta-1 on the surface of activated regulatory T-cells (Tregs). Interaction with integrins (ITGAV:ITGB6 or ITGAV:ITGB8) results in distortion of the Latency-associated peptide chain and subsequent release of the active TGF-beta-1. Its function is as follows. Multifunctional protein that regulates the growth and differentiation of various cell types and is involved in various processes, such as normal development, immune function, microglia function and responses to neurodegeneration. Activation into mature form follows different steps: following cleavage of the proprotein in the Golgi apparatus, Latency-associated peptide (LAP) and Transforming growth factor beta-1 (TGF-beta-1) chains remain non-covalently linked rendering TGF-beta-1 inactive during storage in extracellular matrix. At the same time, LAP chain interacts with 'milieu molecules', such as LTBP1, LRRC32/GARP and LRRC33/NRROS that control activation of TGF-beta-1 and maintain it in a latent state during storage in extracellular milieus. TGF-beta-1 is released from LAP by integrins (ITGAV:ITGB6 or ITGAV:ITGB8): integrin-binding to LAP stabilizes an alternative conformation of the LAP bowtie tail and results in distortion of the LAP chain and subsequent release of the active TGF-beta-1. Once activated following release of LAP, TGF-beta-1 acts by binding to TGF-beta receptors (TGFBR1 and TGFBR2), which transduce signal. While expressed by many cells types, TGF-beta-1 only has a very localized range of action within cell environment thanks to fine regulation of its activation by Latency-associated peptide chain (LAP) and 'milieu molecules'. Plays an important role in bone remodeling: acts as a potent stimulator of osteoblastic bone formation, causing chemotaxis, proliferation and differentiation in committed osteoblasts. Can promote either T-helper 17 cells (Th17) or regulatory T-cells (Treg) lineage differentiation in a concentration-dependent manner. At high concentrations, leads to FOXP3-mediated suppression of RORC and down-regulation of IL-17 expression, favoring Treg cell development. At low concentrations in concert with IL-6 and IL-21, leads to expression of the IL-17 and IL-23 receptors, favoring differentiation to Th17 cells. Stimulates sustained production of collagen through the activation of CREB3L1 by regulated intramembrane proteolysis (RIP). Mediates SMAD2/3 activation by inducing its phosphorylation and subsequent translocation to the nucleus. Positively regulates odontoblastic differentiation in dental papilla cells, via promotion of IPO7-mediated translocation of phosphorylated SMAD2 to the nucleus and subsequent transcription of target genes. Can induce epithelial-to-mesenchymal transition (EMT) and cell migration in various cell types. The protein is Transforming growth factor beta-1 proprotein (TGFB1) of Cavia porcellus (Guinea pig).